The sequence spans 353 residues: Biotin synthase (353 aa).

The Radical SAM core domain occupies 51–270; the sequence is NEVQCNQLLN…IALARIMMPK (220 aa). 3 residues coordinate [4Fe-4S] cluster: Cys66, Cys70, and Cys73. Residues Cys110, Cys141, Cys201, and Arg274 each coordinate [2Fe-2S] cluster. The interval 330-353 is disordered; the sequence is APVEAHSHDHDHDHHDHHHGHSHS. The segment covering 334-343 has biased composition (basic and acidic residues); it reads AHSHDHDHDH. A compositionally biased stretch (basic residues) spans 344–353; sequence HDHHHGHSHS.

This sequence belongs to the radical SAM superfamily. Biotin synthase family. As to quaternary structure, homodimer. [4Fe-4S] cluster serves as cofactor. It depends on [2Fe-2S] cluster as a cofactor.

The enzyme catalyses (4R,5S)-dethiobiotin + (sulfur carrier)-SH + 2 reduced [2Fe-2S]-[ferredoxin] + 2 S-adenosyl-L-methionine = (sulfur carrier)-H + biotin + 2 5'-deoxyadenosine + 2 L-methionine + 2 oxidized [2Fe-2S]-[ferredoxin]. The protein operates within cofactor biosynthesis; biotin biosynthesis; biotin from 7,8-diaminononanoate: step 2/2. Its function is as follows. Catalyzes the conversion of dethiobiotin (DTB) to biotin by the insertion of a sulfur atom into dethiobiotin via a radical-based mechanism. This Rhodopseudomonas palustris (strain HaA2) protein is Biotin synthase.